A 357-amino-acid chain; its full sequence is GTPase Obg (357 aa).

The Obg domain occupies 1–159 (MKFVDEAFID…RNLKLELKVL (159 aa)). In terms of domain architecture, OBG-type G spans 160-334 (ADVGLLGMPN…LVQSIFQHVH (175 aa)). GTP-binding positions include 166 to 173 (GMPNAGKS), 191 to 195 (FTTLH), 213 to 216 (DIPG), 284 to 287 (NKLD), and 315 to 317 (SAL). The Mg(2+) site is built by serine 173 and threonine 193.

It belongs to the TRAFAC class OBG-HflX-like GTPase superfamily. OBG GTPase family. In terms of assembly, monomer. Requires Mg(2+) as cofactor.

It is found in the cytoplasm. An essential GTPase which binds GTP, GDP and possibly (p)ppGpp with moderate affinity, with high nucleotide exchange rates and a fairly low GTP hydrolysis rate. Plays a role in control of the cell cycle, stress response, ribosome biogenesis and in those bacteria that undergo differentiation, in morphogenesis control. The polypeptide is GTPase Obg (Acidovorax ebreus (strain TPSY) (Diaphorobacter sp. (strain TPSY))).